The primary structure comprises 113 residues: Large ribosomal subunit protein uL22 (113 aa).

This sequence belongs to the universal ribosomal protein uL22 family. Part of the 50S ribosomal subunit.

Functionally, this protein binds specifically to 23S rRNA; its binding is stimulated by other ribosomal proteins, e.g. L4, L17, and L20. It is important during the early stages of 50S assembly. It makes multiple contacts with different domains of the 23S rRNA in the assembled 50S subunit and ribosome. The globular domain of the protein is located near the polypeptide exit tunnel on the outside of the subunit, while an extended beta-hairpin is found that lines the wall of the exit tunnel in the center of the 70S ribosome. This Roseiflexus sp. (strain RS-1) protein is Large ribosomal subunit protein uL22.